We begin with the raw amino-acid sequence, 144 residues long: EF-hand calcium-binding domain-containing protein 8 (144 aa).

EF-hand domains lie at 52–86 and 87–122; these read IHLA…VLSS and VSDE…EFQG.

The chain is EF-hand calcium-binding domain-containing protein 8 (EFCAB8) from Homo sapiens (Human).